The primary structure comprises 442 residues: Tryptophan synthase beta chain 2 (442 aa).

K122 carries the post-translational modification N6-(pyridoxal phosphate)lysine.

It belongs to the TrpB family. As to quaternary structure, tetramer of two alpha and two beta chains. Pyridoxal 5'-phosphate is required as a cofactor.

The enzyme catalyses (1S,2R)-1-C-(indol-3-yl)glycerol 3-phosphate + L-serine = D-glyceraldehyde 3-phosphate + L-tryptophan + H2O. The protein operates within amino-acid biosynthesis; L-tryptophan biosynthesis; L-tryptophan from chorismate: step 5/5. Functionally, the beta subunit is responsible for the synthesis of L-tryptophan from indole and L-serine. The protein is Tryptophan synthase beta chain 2 (trpB2) of Methanosarcina mazei (strain ATCC BAA-159 / DSM 3647 / Goe1 / Go1 / JCM 11833 / OCM 88) (Methanosarcina frisia).